We begin with the raw amino-acid sequence, 73 residues long: Tetrahydromethanopterin S-methyltransferase subunit G (73 aa).

The helical transmembrane segment at I48–S68 threads the bilayer.

This sequence belongs to the MtrG family. In terms of assembly, the complex is composed of 8 subunits; MtrA, MtrB, MtrC, MtrD, MtrE, MtrF, MtrG and MtrH.

It localises to the cell membrane. The enzyme catalyses 5-methyl-5,6,7,8-tetrahydromethanopterin + coenzyme M + 2 Na(+)(in) = 5,6,7,8-tetrahydromethanopterin + methyl-coenzyme M + 2 Na(+)(out). Its pathway is one-carbon metabolism; methanogenesis from CO(2); methyl-coenzyme M from 5,10-methylene-5,6,7,8-tetrahydromethanopterin: step 2/2. Its function is as follows. Part of a complex that catalyzes the formation of methyl-coenzyme M and tetrahydromethanopterin from coenzyme M and methyl-tetrahydromethanopterin. This is an energy-conserving, sodium-ion translocating step. This Methanosarcina acetivorans (strain ATCC 35395 / DSM 2834 / JCM 12185 / C2A) protein is Tetrahydromethanopterin S-methyltransferase subunit G.